A 262-amino-acid chain; its full sequence is Type III pantothenate kinase (262 aa).

9-16 (DIGNTNVK) provides a ligand contact to ATP. Residues Tyr103 and 110 to 113 (GADR) contribute to the substrate site. Residue Asp112 is the Proton acceptor of the active site. Asp134 contributes to the K(+) binding site. An ATP-binding site is contributed by Thr137. Thr190 serves as a coordination point for substrate.

This sequence belongs to the type III pantothenate kinase family. Homodimer. It depends on NH4(+) as a cofactor. K(+) is required as a cofactor.

It is found in the cytoplasm. The enzyme catalyses (R)-pantothenate + ATP = (R)-4'-phosphopantothenate + ADP + H(+). It functions in the pathway cofactor biosynthesis; coenzyme A biosynthesis; CoA from (R)-pantothenate: step 1/5. Catalyzes the phosphorylation of pantothenate (Pan), the first step in CoA biosynthesis. This Nitratidesulfovibrio vulgaris (strain ATCC 29579 / DSM 644 / CCUG 34227 / NCIMB 8303 / VKM B-1760 / Hildenborough) (Desulfovibrio vulgaris) protein is Type III pantothenate kinase.